A 384-amino-acid chain; its full sequence is 8-amino-7-oxononanoate synthase (384 aa).

A substrate-binding site is contributed by R21. Residue 108 to 109 (GF) participates in pyridoxal 5'-phosphate binding. H133 serves as a coordination point for substrate. Positions 179, 207, and 233 each coordinate pyridoxal 5'-phosphate. K236 is modified (N6-(pyridoxal phosphate)lysine). T350 contacts substrate.

Belongs to the class-II pyridoxal-phosphate-dependent aminotransferase family. BioF subfamily. Homodimer. The cofactor is pyridoxal 5'-phosphate.

It catalyses the reaction 6-carboxyhexanoyl-[ACP] + L-alanine + H(+) = (8S)-8-amino-7-oxononanoate + holo-[ACP] + CO2. The protein operates within cofactor biosynthesis; biotin biosynthesis. Its function is as follows. Catalyzes the decarboxylative condensation of pimeloyl-[acyl-carrier protein] and L-alanine to produce 8-amino-7-oxononanoate (AON), [acyl-carrier protein], and carbon dioxide. The protein is 8-amino-7-oxononanoate synthase of Erwinia tasmaniensis (strain DSM 17950 / CFBP 7177 / CIP 109463 / NCPPB 4357 / Et1/99).